An 83-amino-acid polypeptide reads, in one-letter code: Kappa-theraphotoxin-Cg2a (83 aa).

A signal peptide spans methionine 1–alanine 21. The propeptide occupies glutamate 22–arginine 53. 3 disulfide bridges follow: cysteine 55–cysteine 69, cysteine 62–cysteine 74, and cysteine 68–cysteine 78. Leucine 82 carries the post-translational modification Leucine amide.

It belongs to the neurotoxin 30 (phrixotoxin) family. Expressed by the venom gland.

The protein resides in the secreted. In terms of biological role, inhibits voltage-gated potassium channels of the subtype Kv4.1/KCND1 with high affinity and shows weak effects on Kv4.2/KCND2 and Kv2.1/KCNB1 subtypes. The toxin modifies the gating behavior of the channel and may interact with the S3-S4 extracellular loop. In Chilobrachys guangxiensis (Chinese earth tiger tarantula), this protein is Kappa-theraphotoxin-Cg2a.